The chain runs to 164 residues: Putative ankyrin repeat protein RBE_0585 (164 aa).

ANK repeat units follow at residues 42-107 (NQDT…VAIL) and 126-149 (DKDTPLIEAARAALPQSISFMLDY).

This chain is Putative ankyrin repeat protein RBE_0585, found in Rickettsia bellii (strain RML369-C).